The sequence spans 110 residues: Protein YcgL (110 aa).

The YcgL domain occupies 14-98; it reads MFCVIYRSSK…PPEDLLKQHL (85 aa). The segment at 88 to 110 is disordered; the sequence is PPPEDLLKQHLSSVGQNTSPADR. Positions 97-110 are enriched in polar residues; that stretch reads HLSSVGQNTSPADR.

The sequence is that of Protein YcgL from Salmonella paratyphi A (strain ATCC 9150 / SARB42).